The chain runs to 334 residues: Ketol-acid reductoisomerase (NADP(+)) (334 aa).

A KARI N-terminal Rossmann domain is found at 1–181 (MTTVYYDQDV…GATRAGVIET (181 aa)). Residues 25–28 (YGSQ), R48, S52, and 82–85 (DEIQ) contribute to the NADP(+) site. H107 is a catalytic residue. G133 provides a ligand contact to NADP(+). The 146-residue stretch at 182-327 (TFKEETETDL…RELREMMPFI (146 aa)) folds into the KARI C-terminal knotted domain. The Mg(2+) site is built by D190, E194, E226, and E230. S251 serves as a coordination point for substrate.

Belongs to the ketol-acid reductoisomerase family. Mg(2+) is required as a cofactor.

The enzyme catalyses (2R)-2,3-dihydroxy-3-methylbutanoate + NADP(+) = (2S)-2-acetolactate + NADPH + H(+). It catalyses the reaction (2R,3R)-2,3-dihydroxy-3-methylpentanoate + NADP(+) = (S)-2-ethyl-2-hydroxy-3-oxobutanoate + NADPH + H(+). Its pathway is amino-acid biosynthesis; L-isoleucine biosynthesis; L-isoleucine from 2-oxobutanoate: step 2/4. It participates in amino-acid biosynthesis; L-valine biosynthesis; L-valine from pyruvate: step 2/4. Its function is as follows. Involved in the biosynthesis of branched-chain amino acids (BCAA). Catalyzes an alkyl-migration followed by a ketol-acid reduction of (S)-2-acetolactate (S2AL) to yield (R)-2,3-dihydroxy-isovalerate. In the isomerase reaction, S2AL is rearranged via a Mg-dependent methyl migration to produce 3-hydroxy-3-methyl-2-ketobutyrate (HMKB). In the reductase reaction, this 2-ketoacid undergoes a metal-dependent reduction by NADPH to yield (R)-2,3-dihydroxy-isovalerate. In Staphylococcus aureus (strain USA300), this protein is Ketol-acid reductoisomerase (NADP(+)).